The chain runs to 27 residues: Equinin A (27 aa).

Positions 1–13 are enriched in basic and acidic residues; the sequence is AVDKGGGKAEKKD. The tract at residues 1–27 is disordered; it reads AVDKGGGKAEKKDGNRKKKLAGGEGGG.

It localises to the secreted. Peptide with unknown function. Does not show antimicrobial and hemolytic activities. The protein is Equinin A of Actinia equina (Beadlet anemone).